The chain runs to 187 residues: Elongation factor P (187 aa).

Belongs to the elongation factor P family.

It is found in the cytoplasm. Its pathway is protein biosynthesis; polypeptide chain elongation. Involved in peptide bond synthesis. Stimulates efficient translation and peptide-bond synthesis on native or reconstituted 70S ribosomes in vitro. Probably functions indirectly by altering the affinity of the ribosome for aminoacyl-tRNA, thus increasing their reactivity as acceptors for peptidyl transferase. The polypeptide is Elongation factor P (Desulfotalea psychrophila (strain LSv54 / DSM 12343)).